A 308-amino-acid polypeptide reads, in one-letter code: Glucan 1,3-beta-glucosidase (308 aa).

An N-terminal signal peptide occupies residues 1 to 18; that stretch reads MQIKFLTTLATVLTSVAA. Glu119 functions as the Proton donor in the catalytic mechanism. Asn197 carries N-linked (GlcNAc...) asparagine glycosylation. Glu228 acts as the Nucleophile in catalysis.

It belongs to the glycosyl hydrolase 17 family.

The protein resides in the secreted. It localises to the cell wall. The catalysed reaction is Successive hydrolysis of beta-D-glucose units from the non-reducing ends of (1-&gt;3)-beta-D-glucans, releasing alpha-glucose.. This chain is Glucan 1,3-beta-glucosidase (BGL2), found in Candida albicans (Yeast).